Consider the following 631-residue polypeptide: Phosphomethylpyrimidine synthase (631 aa).

Substrate is bound by residues N239, M268, Y297, H333, 353–355 (SRG), 394–397 (DGLR), and E433. H437 serves as a coordination point for Zn(2+). Y460 lines the substrate pocket. H501 serves as a coordination point for Zn(2+). Positions 581, 584, and 589 each coordinate [4Fe-4S] cluster.

Belongs to the ThiC family. Homodimer. The cofactor is [4Fe-4S] cluster.

It carries out the reaction 5-amino-1-(5-phospho-beta-D-ribosyl)imidazole + S-adenosyl-L-methionine = 4-amino-2-methyl-5-(phosphooxymethyl)pyrimidine + CO + 5'-deoxyadenosine + formate + L-methionine + 3 H(+). It functions in the pathway cofactor biosynthesis; thiamine diphosphate biosynthesis. Functionally, catalyzes the synthesis of the hydroxymethylpyrimidine phosphate (HMP-P) moiety of thiamine from aminoimidazole ribotide (AIR) in a radical S-adenosyl-L-methionine (SAM)-dependent reaction. This Shigella dysenteriae serotype 1 (strain Sd197) protein is Phosphomethylpyrimidine synthase.